Here is a 368-residue protein sequence, read N- to C-terminus: Polynucleotide 5'-hydroxyl-kinase NOL9 (368 aa).

36–43 (GPKNSGKS) contacts ATP.

This sequence belongs to the Clp1 family. NOL9/GRC3 subfamily.

It localises to the nucleus. The protein localises to the nucleolus. Polynucleotide 5'-kinase involved in rRNA processing. The sequence is that of Polynucleotide 5'-hydroxyl-kinase NOL9 from Arabidopsis thaliana (Mouse-ear cress).